Consider the following 173-residue polypeptide: 2-C-methyl-D-erythritol 2,4-cyclodiphosphate synthase (173 aa).

Residues aspartate 17 and histidine 19 each coordinate a divalent metal cation. 4-CDP-2-C-methyl-D-erythritol 2-phosphate-binding positions include 17–19 (DVH) and 49–50 (HS). Histidine 57 lines the a divalent metal cation pocket. Residues 76–80 (FPNTD), 147–150 (TTTE), and arginine 157 contribute to the 4-CDP-2-C-methyl-D-erythritol 2-phosphate site.

It belongs to the IspF family. Homotrimer. A divalent metal cation serves as cofactor.

It carries out the reaction 4-CDP-2-C-methyl-D-erythritol 2-phosphate = 2-C-methyl-D-erythritol 2,4-cyclic diphosphate + CMP. It participates in isoprenoid biosynthesis; isopentenyl diphosphate biosynthesis via DXP pathway; isopentenyl diphosphate from 1-deoxy-D-xylulose 5-phosphate: step 4/6. Involved in the biosynthesis of isopentenyl diphosphate (IPP) and dimethylallyl diphosphate (DMAPP), two major building blocks of isoprenoid compounds. Catalyzes the conversion of 4-diphosphocytidyl-2-C-methyl-D-erythritol 2-phosphate (CDP-ME2P) to 2-C-methyl-D-erythritol 2,4-cyclodiphosphate (ME-CPP) with a corresponding release of cytidine 5-monophosphate (CMP). The polypeptide is 2-C-methyl-D-erythritol 2,4-cyclodiphosphate synthase (Ehrlichia ruminantium (strain Welgevonden)).